We begin with the raw amino-acid sequence, 231 residues long: Very-long-chain (3R)-3-hydroxyacyl-CoA dehydratase 4 (231 aa).

Residues 1-19 (MGPVALPTWLQPRYRKNAY) are Cytoplasmic-facing. A helical membrane pass occupies residues 20 to 40 (LFIYYLIQFCGHSWIFTNMTV). Residues 41-56 (RFFSFGKDSMVDTFYA) are Lumenal-facing. A helical membrane pass occupies residues 57–77 (IGLVMQLCQSISLLELLHIYV). Over 78–112 (GIESNHLLPRILQLTERIIVLFMVITSQEEVQEKY) the chain is Cytoplasmic. A helical membrane pass occupies residues 113–133 (VVCVLFIFRNLLDMVRYTYSM). Residues 134–135 (LS) are Lumenal-facing. The helical transmembrane segment at 136–156 (VIGISYAVLTWFSQTLWMPIY) threads the bilayer. Residue tyrosine 156 is part of the active site. Position 157 (proline 157) is a topological domain, cytoplasmic. Residues 158–178 (LCVLAEAFTIYQSLPYFESFG) form a helical membrane-spanning segment. Glutamate 163 is a catalytic residue. Over 179 to 189 (TYSTKLPFDLS) the chain is Lumenal. A helical membrane pass occupies residues 190–210 (FYFPYVLKIYLMMLFVGMYFT). Over 211-231 (YNHLYSERRDILRVFPNKKKM) the chain is Cytoplasmic.

This sequence belongs to the very long-chain fatty acids dehydratase HACD family. As to quaternary structure, may interact with enzymes of the ELO family (including ELOVL1); with those enzymes that mediate condensation, the first of the four steps of the reaction cycle responsible for fatty acids elongation, may be part of a larger fatty acids elongase complex.

Its subcellular location is the endoplasmic reticulum membrane. The catalysed reaction is a very-long-chain (3R)-3-hydroxyacyl-CoA = a very-long-chain (2E)-enoyl-CoA + H2O. The enzyme catalyses (3R)-hydroxyhexadecanoyl-CoA = (2E)-hexadecenoyl-CoA + H2O. It participates in lipid metabolism; fatty acid biosynthesis. Functionally, catalyzes the third of the four reactions of the long-chain fatty acids elongation cycle. This endoplasmic reticulum-bound enzymatic process, allows the addition of two carbons to the chain of long- and very long-chain fatty acids/VLCFAs per cycle. This enzyme catalyzes the dehydration of the 3-hydroxyacyl-CoA intermediate into trans-2,3-enoyl-CoA, within each cycle of fatty acid elongation. Thereby, it participates in the production of VLCFAs of different chain lengths that are involved in multiple biological processes as precursors of membrane lipids and lipid mediators. This is Very-long-chain (3R)-3-hydroxyacyl-CoA dehydratase 4 from Bos taurus (Bovine).